Reading from the N-terminus, the 670-residue chain is NADH-ubiquinone oxidoreductase chain 5 (670 aa).

19 helical membrane passes run 1 to 21 (MYIV…IFGH), 31 to 51 (IAVG…YEIL), 81 to 101 (LTSI…LYSM), 111 to 131 (TRFF…VTAD), 133 to 153 (FVQL…LINF), 178 to 198 (LFFG…SVIF), 211 to 231 (LLGY…IGVV), 251 to 271 (TPVS…FLVL), 283 to 303 (ILNI…TIGI), 311 to 331 (VIAY…GLLN), 339 to 359 (LTTH…VIHG), 375 to 395 (LMPL…GFPF), 421 to 441 (AIIG…LLIL), 462 to 482 (TNMV…GYVT), 519 to 539 (LLPL…YFNI), 566 to 586 (FDFL…YDVM), 594 to 614 (LWEK…FTAL), 629 to 649 (IVQT…TGFI), and 650 to 670 (YMEL…IKID).

Belongs to the complex I subunit 5 family.

It localises to the mitochondrion inner membrane. The enzyme catalyses a ubiquinone + NADH + 5 H(+)(in) = a ubiquinol + NAD(+) + 4 H(+)(out). Core subunit of the mitochondrial membrane respiratory chain NADH dehydrogenase (Complex I) that is believed to belong to the minimal assembly required for catalysis. Complex I functions in the transfer of electrons from NADH to the respiratory chain. The immediate electron acceptor for the enzyme is believed to be ubiquinone. In Dictyostelium discoideum (Social amoeba), this protein is NADH-ubiquinone oxidoreductase chain 5 (nad5).